The following is a 244-amino-acid chain: 5-oxoprolinase subunit A (244 aa).

This sequence belongs to the LamB/PxpA family. Forms a complex composed of PxpA, PxpB and PxpC.

The catalysed reaction is 5-oxo-L-proline + ATP + 2 H2O = L-glutamate + ADP + phosphate + H(+). Functionally, catalyzes the cleavage of 5-oxoproline to form L-glutamate coupled to the hydrolysis of ATP to ADP and inorganic phosphate. The polypeptide is 5-oxoprolinase subunit A (Salmonella newport (strain SL254)).